Reading from the N-terminus, the 152-residue chain is Large ribosomal subunit protein bL9 (152 aa).

The protein belongs to the bacterial ribosomal protein bL9 family.

Functionally, binds to the 23S rRNA. This is Large ribosomal subunit protein bL9 from Mycoplasmopsis synoviae (strain 53) (Mycoplasma synoviae).